A 323-amino-acid chain; its full sequence is MKKNKDVLLKNKILKKLNIINIKNLDNIKEKLKKPDWIKIKIPVNTSRIYQIKNALRKNNLYSVCEEAHCPNLSECFNNGTATFMILGSICTRNCPFCAVFHGRPNPVNVEEPQKLSDTIFDMGINYVVITSVVRDDLYDGGAEHFVNCIKAIKNKNQVKIEILVPDFRGRIELILNIFNNALPDIFNHNIENVPRLYKKIRPGANYQRSLLLLESFKKKYCSVLTKSGLMLGLGEKDVEIIQVMKDLYSSGVTLLTVGQYLQPSIHHLPVKRYIPLSEFENIKKEALSIGFTNAFCGPFVRSSYHASFQSHLPIKNNDINNI.

Positions 65, 70, 76, 91, 95, 98, and 304 each coordinate [4Fe-4S] cluster. Residues 77-293 enclose the Radical SAM core domain; it reads FNNGTATFMI…KKEALSIGFT (217 aa).

This sequence belongs to the radical SAM superfamily. Lipoyl synthase family. [4Fe-4S] cluster is required as a cofactor.

Its subcellular location is the cytoplasm. It catalyses the reaction [[Fe-S] cluster scaffold protein carrying a second [4Fe-4S](2+) cluster] + N(6)-octanoyl-L-lysyl-[protein] + 2 oxidized [2Fe-2S]-[ferredoxin] + 2 S-adenosyl-L-methionine + 4 H(+) = [[Fe-S] cluster scaffold protein] + N(6)-[(R)-dihydrolipoyl]-L-lysyl-[protein] + 4 Fe(3+) + 2 hydrogen sulfide + 2 5'-deoxyadenosine + 2 L-methionine + 2 reduced [2Fe-2S]-[ferredoxin]. Its pathway is protein modification; protein lipoylation via endogenous pathway; protein N(6)-(lipoyl)lysine from octanoyl-[acyl-carrier-protein]: step 2/2. Its function is as follows. Catalyzes the radical-mediated insertion of two sulfur atoms into the C-6 and C-8 positions of the octanoyl moiety bound to the lipoyl domains of lipoate-dependent enzymes, thereby converting the octanoylated domains into lipoylated derivatives. This is Lipoyl synthase from Buchnera aphidicola subsp. Acyrthosiphon pisum (strain 5A).